We begin with the raw amino-acid sequence, 413 residues long: Peptidase T (413 aa).

His-82 provides a ligand contact to Zn(2+). Asp-84 is a catalytic residue. Asp-145 provides a ligand contact to Zn(2+). Catalysis depends on Glu-179, which acts as the Proton acceptor. Residues Glu-180, Asp-202, and His-384 each coordinate Zn(2+).

It belongs to the peptidase M20B family. Zn(2+) is required as a cofactor.

It is found in the cytoplasm. The catalysed reaction is Release of the N-terminal residue from a tripeptide.. In terms of biological role, cleaves the N-terminal amino acid of tripeptides. The protein is Peptidase T of Latilactobacillus sakei subsp. sakei (strain 23K) (Lactobacillus sakei subsp. sakei).